We begin with the raw amino-acid sequence, 588 residues long: UDP-N-acetylmuramate--L-alanine ligase (588 aa).

119-125 serves as a coordination point for ATP; the sequence is GSHGKST. Residues 344 to 371 are compositionally biased toward low complexity; it reads VPAAAGAAAAPPVRRDPATAAAAATTAP. The disordered stretch occupies residues 344–411; that stretch reads VPAAAGAAAA…APAAGPDHAA (68 aa). Over residues 372–381 the composition is skewed to pro residues; it reads IGPPDSPPPT. Low complexity predominate over residues 382 to 411; that stretch reads GIALPRAAPPAVDAPVAATPAPAAGPDHAA.

This sequence belongs to the MurCDEF family.

It is found in the cytoplasm. It catalyses the reaction UDP-N-acetyl-alpha-D-muramate + L-alanine + ATP = UDP-N-acetyl-alpha-D-muramoyl-L-alanine + ADP + phosphate + H(+). Its pathway is cell wall biogenesis; peptidoglycan biosynthesis. Functionally, cell wall formation. In Frankia alni (strain DSM 45986 / CECT 9034 / ACN14a), this protein is UDP-N-acetylmuramate--L-alanine ligase.